We begin with the raw amino-acid sequence, 220 residues long: uncharacterized protein (220 aa).

Residues 194–220 are disordered; the sequence is DQSQQQATKSNSKTKKLKGNHGEKTKI. Residues 195–204 are compositionally biased toward polar residues; sequence QSQQQATKSN.

This is an uncharacterized protein from Borreliella burgdorferi (strain ATCC 35210 / DSM 4680 / CIP 102532 / B31) (Borrelia burgdorferi).